Reading from the N-terminus, the 84-residue chain is Polyketide-8 synthase acyl carrier protein 1 (84 aa).

In terms of domain architecture, Carrier spans 7-82 (AARKQEIKEI…GVYVVVSEAA (76 aa)). O-(pantetheine 4'-phosphoryl)serine is present on Ser-42.

In terms of processing, 4'-phosphopantetheine is transferred from CoA to a specific serine of the apo-ACP-like protein.

Functionally, acyl carrier protein. This Streptomyces avermitilis (strain ATCC 31267 / DSM 46492 / JCM 5070 / NBRC 14893 / NCIMB 12804 / NRRL 8165 / MA-4680) protein is Polyketide-8 synthase acyl carrier protein 1.